The chain runs to 606 residues: Probable glutamine--fructose-6-phosphate aminotransferase [isomerizing] (606 aa).

The For GATase activity role is filled by cysteine 2. In terms of domain architecture, Glutamine amidotransferase type-2 spans cysteine 2–asparagine 224. 2 SIS domains span residues phenylalanine 282–asparagine 427 and leucine 458–proline 596.

It catalyses the reaction D-fructose 6-phosphate + L-glutamine = D-glucosamine 6-phosphate + L-glutamate. The protein operates within nucleotide-sugar biosynthesis; UDP-N-acetyl-alpha-D-glucosamine biosynthesis; alpha-D-glucosamine 6-phosphate from D-fructose 6-phosphate: step 1/1. Its function is as follows. Controls the flux of glucose into the hexosamine pathway. Most likely involved in regulating the availability of precursors for glycosylation of proteins (Potential). The polypeptide is Probable glutamine--fructose-6-phosphate aminotransferase [isomerizing] (Acanthamoeba polyphaga (Amoeba)).